The primary structure comprises 702 residues: Vacuolar protein sorting-associated protein 52 homolog (702 aa).

Residues 505–535 (KEMGAKMEAVLENSEDSIEQLLTRMSAMQQT) adopt a coiled-coil conformation.

The protein belongs to the VPS52 family. In terms of assembly, component of the Golgi-associated retrograde protein (GARP) complex, also called VFT (VPS fifty-three) complex, composed of vps-51, vps-52, vps-53 and vps-54. Within the complex interacts with vps-53 and vps-54. Interacts with the small GTPases rab-6.1 and rab-6.2. Ubiquitously expressed, with particularly strong expression in neuronal cells. Specifically expressed in head and tail neurons and in the pharynx and ventral cord motor neurons.

It localises to the golgi apparatus. The protein localises to the trans-Golgi network. The protein resides in the perikaryon. Its subcellular location is the cytoplasm. It is found in the perinuclear region. Acts as a component of the GARP complex that is involved in retrograde transport from early and late endosomes to the trans-Golgi network (TGN). The GARP complex facilitates tethering as well as SNARE complex assembly at the Golgi. Plays a role in the trafficking of cargo to dense-core vesicles, probably through association with the EARP-interacting protein eipr-1. Important for neuronal function. This Caenorhabditis elegans protein is Vacuolar protein sorting-associated protein 52 homolog.